Reading from the N-terminus, the 184-residue chain is Probable DNA-directed RNA polymerase subunit delta (184 aa).

An HTH HARE-type domain is found at 14–81 (LSMIEVARAI…GENVWALRSW (68 aa)). Disordered stretches follow at residues 88-107 (DEEVNHPEDEEEDDSRKHHK) and 118-184 (GDDD…DEDD). The span at 118–164 (GDDDIIDYDNDDPEDDDLDAATDDSDDDYSDDDSDYDEDNDDADDVL) shows a compositional bias: acidic residues.

It belongs to the RpoE family. RNAP is composed of a core of 2 alpha, a beta and a beta' subunits. The core is associated with a delta subunit and one of several sigma factors.

Its function is as follows. Participates in both the initiation and recycling phases of transcription. In the presence of the delta subunit, RNAP displays an increased specificity of transcription, a decreased affinity for nucleic acids, and an increased efficiency of RNA synthesis because of enhanced recycling. The sequence is that of Probable DNA-directed RNA polymerase subunit delta from Lactobacillus acidophilus (strain ATCC 700396 / NCK56 / N2 / NCFM).